We begin with the raw amino-acid sequence, 242 residues long: Phosphoribosylaminoimidazole-succinocarboxamide synthase (242 aa).

It belongs to the SAICAR synthetase family.

The enzyme catalyses 5-amino-1-(5-phospho-D-ribosyl)imidazole-4-carboxylate + L-aspartate + ATP = (2S)-2-[5-amino-1-(5-phospho-beta-D-ribosyl)imidazole-4-carboxamido]succinate + ADP + phosphate + 2 H(+). Its pathway is purine metabolism; IMP biosynthesis via de novo pathway; 5-amino-1-(5-phospho-D-ribosyl)imidazole-4-carboxamide from 5-amino-1-(5-phospho-D-ribosyl)imidazole-4-carboxylate: step 1/2. The protein is Phosphoribosylaminoimidazole-succinocarboxamide synthase of Prochlorococcus marinus subsp. pastoris (strain CCMP1986 / NIES-2087 / MED4).